The sequence spans 222 residues: Vespryn (222 aa).

The signal sequence occupies residues 1–44 (MSPSAGLQFSLYFLQTKKVLWKLTDKEKGLCYILLFTLCFFADQ). The propeptide occupies 45–52 (ENGGKALA). The 107-residue stretch at 53–159 (SPPGIWKRAD…RIWQMGLWWL (107 aa)) folds into the B30.2/SPRY domain. The propeptide occupies 160 to 222 (RHLETDPGRV…LGGTVSLTTL (63 aa)). Asparagine 195 is a glycosylation site (N-linked (GlcNAc...) asparagine).

It belongs to the ohanin/vespryn family. Expressed by the venom gland.

It is found in the secreted. Functionally, neurotoxin that produces dose-dependent hypolocomotion and hyperalgesia in mice. May directly act on the central nervous system, as it is 6500-fold more potent when administered intracerebroventricularly than intraperitoneal. This Crotalus adamanteus (Eastern diamondback rattlesnake) protein is Vespryn.